The primary structure comprises 431 residues: Tol-Pal system protein TolB (431 aa).

The first 26 residues, 1-26, serve as a signal peptide directing secretion; the sequence is MSLMTKLGFRALVASCLIAAGGAANA. The disordered stretch occupies residues 411–431; the sequence is PQILSVQGGSVREPSWGPFMQ.

It belongs to the TolB family. The Tol-Pal system is composed of five core proteins: the inner membrane proteins TolA, TolQ and TolR, the periplasmic protein TolB and the outer membrane protein Pal. They form a network linking the inner and outer membranes and the peptidoglycan layer.

It is found in the periplasm. Its function is as follows. Part of the Tol-Pal system, which plays a role in outer membrane invagination during cell division and is important for maintaining outer membrane integrity. This Burkholderia vietnamiensis (strain G4 / LMG 22486) (Burkholderia cepacia (strain R1808)) protein is Tol-Pal system protein TolB.